Here is an 859-residue protein sequence, read N- to C-terminus: Leucine--tRNA ligase (859 aa).

Residues P42–H52 carry the 'HIGH' region motif. The 'KMSKS' region motif lies at K618–S622. Residue K621 coordinates ATP.

It belongs to the class-I aminoacyl-tRNA synthetase family.

It is found in the cytoplasm. The catalysed reaction is tRNA(Leu) + L-leucine + ATP = L-leucyl-tRNA(Leu) + AMP + diphosphate. This Shewanella baltica (strain OS223) protein is Leucine--tRNA ligase.